The sequence spans 113 residues: Cell division protein FtsB (113 aa).

The Cytoplasmic segment spans residues 1-3 (MRL). Residues 4–21 (ISLLLFVLLLAIQYPLWL) traverse the membrane as a helical segment. The Periplasmic segment spans residues 22–113 (GKGGWLRVWE…PNSPAATGRH (92 aa)). A coiled-coil region spans residues 34–63 (HQVQEQATRNQMLKLRNAKLEGEVKDLQDG). The interval 93–113 (KVSATPPLPPPPNSPAATGRH) is disordered.

It belongs to the FtsB family. Part of a complex composed of FtsB, FtsL and FtsQ.

The protein localises to the cell inner membrane. Its function is as follows. Essential cell division protein. May link together the upstream cell division proteins, which are predominantly cytoplasmic, with the downstream cell division proteins, which are predominantly periplasmic. The sequence is that of Cell division protein FtsB from Cupriavidus pinatubonensis (strain JMP 134 / LMG 1197) (Cupriavidus necator (strain JMP 134)).